A 364-amino-acid chain; its full sequence is MAHRFPALTQEQKKELSEIAQSIVANGKGILAADESVGTMGNRLQRIKVENTEENRRQFREILFSVDSSINQSIGGVILFHETLYQKDSQGKLFRNILKEKGIVVGIKLDQGGAPLAGTNKETTIQGLDGLSERCAQYKKDGVDFGKWRAVLRIADQCPSSLAIQENANALARYASICQQNGLVPIVEPEVIPDGDHDLEHCQYVTEKVLAAVYKALNDHHVYLEGTLLKPNMVTAGHACTKKYTPEQVAMATVTALHRTVPAAVPGICFLSGGMSEEDATLNLNAINLCPLPKPWKLSFSYGRALQASALAAWGGKAANKEATQEAFMKRAMANCQAAKGQYVHTGSSGAASTQSLFTACYTY.

Ala2 carries the post-translational modification N-acetylalanine. At Lys13 the chain carries N6-succinyllysine. Ser36 bears the Phosphoserine mark. Thr39 carries the phosphothreonine modification. Residue Arg43 coordinates beta-D-fructose 1,6-bisphosphate. Position 89 is a phosphoserine (Ser89). Thr119 bears the Phosphothreonine mark. Residue Lys121 is modified to N6-succinyllysine. Residue Ser132 is modified to Phosphoserine. Glu188 (proton acceptor) is an active-site residue. The active-site Schiff-base intermediate with dihydroxyacetone-P is the Lys230. 4 positions are modified to phosphoserine: Ser272, Ser276, Ser299, and Ser301. 272–274 (SGG) contacts beta-D-fructose 1,6-bisphosphate. Arg304 contacts beta-D-fructose 1,6-bisphosphate. Ser309 is subject to Phosphoserine. An N6-succinyllysine modification is found at Lys317.

This sequence belongs to the class I fructose-bisphosphate aldolase family. In terms of assembly, homotetramer. Interacts with BBS1, BBS2, BBS4 and BBS7. Forms a ternary complex with G6PD and TP53; this interaction is direct.

The protein resides in the cytoplasm. It localises to the cytosol. Its subcellular location is the cytoskeleton. It is found in the microtubule organizing center. The protein localises to the centrosome. The protein resides in the centriolar satellite. It carries out the reaction beta-D-fructose 1,6-bisphosphate = D-glyceraldehyde 3-phosphate + dihydroxyacetone phosphate. The catalysed reaction is beta-D-fructose 1-phosphate = D-glyceraldehyde + dihydroxyacetone phosphate. It participates in carbohydrate degradation; glycolysis; D-glyceraldehyde 3-phosphate and glycerone phosphate from D-glucose: step 4/4. It functions in the pathway carbohydrate biosynthesis; gluconeogenesis. The protein operates within carbohydrate metabolism; fructose metabolism. Functionally, catalyzes the aldol cleavage of fructose 1,6-biphosphate to form two triosephosphates dihydroxyacetone phosphate and D-glyceraldehyde 3-phosphate in glycolysis as well as the reverse stereospecific aldol addition reaction in gluconeogenesis. In fructolysis, metabolizes fructose 1-phosphate derived from the phosphorylation of dietary fructose by fructokinase into dihydroxyacetone phosphate and D-glyceraldehyde. Acts as an adapter independently of its enzymatic activity, exerts a tumor suppressor role by stabilizing the ternary complex with G6PD and TP53 to inhibit G6PD activity and keep oxidative pentose phosphate metabolism in check. This chain is Fructose-bisphosphate aldolase B, found in Homo sapiens (Human).